The sequence spans 925 residues: Translation initiation factor IF-2 (925 aa).

Residues 190 to 329 are disordered; sequence PAAPTSEAAP…RRRDEREAAV (140 aa). Composition is skewed to pro residues over residues 199 to 209, 217 to 238, and 279 to 288; these read PPEPEPTPLPA, PVRP…PAPR, and RPVPAQPAPQ. Low complexity predominate over residues 289-307; sequence TPTRSGSGIAKKGAITKAG. Residues 320–329 are compositionally biased toward basic and acidic residues; sequence RRRDEREAAV. The tr-type G domain maps to 417–589; sequence VRPPVVTIMG…LLLVADYELE (173 aa). Residues 426 to 433 are G1; that stretch reads GHVDHGKT. Residue 426–433 coordinates GTP; it reads GHVDHGKT. The tract at residues 451-455 is G2; the sequence is GITQH. A G3 region spans residues 476 to 479; the sequence is DTPG. Residues 476 to 480 and 530 to 533 contribute to the GTP site; these read DTPGH and NKVD. The G4 stretch occupies residues 530-533; sequence NKVD. The interval 566-568 is G5; the sequence is SAK.

The protein belongs to the TRAFAC class translation factor GTPase superfamily. Classic translation factor GTPase family. IF-2 subfamily.

The protein resides in the cytoplasm. One of the essential components for the initiation of protein synthesis. Protects formylmethionyl-tRNA from spontaneous hydrolysis and promotes its binding to the 30S ribosomal subunits. Also involved in the hydrolysis of GTP during the formation of the 70S ribosomal complex. The polypeptide is Translation initiation factor IF-2 (Gloeobacter violaceus (strain ATCC 29082 / PCC 7421)).